The following is a 343-amino-acid chain: Cytoplasmic tRNA 2-thiolation protein 1 (343 aa).

This sequence belongs to the TtcA family. CTU1/NCS6/ATPBD3 subfamily.

The protein resides in the cytoplasm. It functions in the pathway tRNA modification; 5-methoxycarbonylmethyl-2-thiouridine-tRNA biosynthesis. Functionally, plays a central role in 2-thiolation of mcm(5)S(2)U at tRNA wobble positions of tRNA(Lys), tRNA(Glu) and tRNA(Gln). Directly binds tRNAs and probably acts by catalyzing adenylation of tRNAs, an intermediate required for 2-thiolation. It is unclear whether it acts as a sulfurtransferase that transfers sulfur from thiocarboxylated URM1 onto the uridine of tRNAs at wobble position. The protein is Cytoplasmic tRNA 2-thiolation protein 1 of Drosophila willistoni (Fruit fly).